The primary structure comprises 138 residues: Large ribosomal subunit protein uL16 (138 aa).

Basic residues predominate over residues 1 to 19; it reads MLIPRKVKHRKQHHPKKKG. The interval 1-24 is disordered; that stretch reads MLIPRKVKHRKQHHPKKKGTASGG.

This sequence belongs to the universal ribosomal protein uL16 family. In terms of assembly, part of the 50S ribosomal subunit.

Functionally, binds 23S rRNA and is also seen to make contacts with the A and possibly P site tRNAs. The polypeptide is Large ribosomal subunit protein uL16 (Mycobacteroides abscessus (strain ATCC 19977 / DSM 44196 / CCUG 20993 / CIP 104536 / JCM 13569 / NCTC 13031 / TMC 1543 / L948) (Mycobacterium abscessus)).